Here is a 379-residue protein sequence, read N- to C-terminus: Epoxyqueuosine reductase (379 aa).

The active-site Proton donor is Asp139. Positions 181 to 213 (IPLPVDQPVEEGCGKCVACMTICPTGAIVEPYT) constitute a 4Fe-4S ferredoxin-type domain. [4Fe-4S] cluster is bound by residues Cys193, Cys196, Cys199, Cys203, Cys219, Cys246, Cys249, and Cys253.

Belongs to the QueG family. As to quaternary structure, monomer. Cob(II)alamin serves as cofactor. [4Fe-4S] cluster is required as a cofactor.

It is found in the cytoplasm. It catalyses the reaction epoxyqueuosine(34) in tRNA + AH2 = queuosine(34) in tRNA + A + H2O. Its pathway is tRNA modification; tRNA-queuosine biosynthesis. Catalyzes the conversion of epoxyqueuosine (oQ) to queuosine (Q), which is a hypermodified base found in the wobble positions of tRNA(Asp), tRNA(Asn), tRNA(His) and tRNA(Tyr). This chain is Epoxyqueuosine reductase, found in Shigella dysenteriae serotype 1 (strain Sd197).